We begin with the raw amino-acid sequence, 528 residues long: MAKKILYQDNARKALEKGMDTLVEAVAITLGPKGRNVVLERKFGAPQIINDGVTIAKEIELQDLAENTGVALIRQAASKTNDVAGDGTTTATVLAHAIVKQGLKNVAAGANPITLKKGIQKAVKFVVGKIAEYSKPICSMQDVTHIGSISSGNDVEVGTMIANAIQQVGKEGIISLEEGQSTSTELDIKEGMKFDKGFISPYFVTDTSRMEVIQDNPYILITDKKITLIQQELLPILEKVTKTGRPLLIIAEDIEKEALATIIVNKLRGIINVVAVRAPGFGDRRKLLLEDIAILTSGVVITQDMGLSLDSMSLDQLGSARRVQITKDSTTIVADAQKDLIQARCDQIRRQLEAATNSYAKDKLHERLAKLSGGVAVVKVGAATETEMRDKKLRLEDAINATKAAIEEGIVPGGGSTFVHLSEVLRVWAINNLVEEELVGALIIVDSLLHPLKRIVENAGNNGSIIIEKIKNSNFSTGYNADIGQIVDMYKEGIIDPAKVTRSALQNAASIASMILTTECLIAEQVDN.

ATP is bound by residues 29–32 (TLGP), 86–90 (DGTTT), Gly414, and Asp496.

This sequence belongs to the chaperonin (HSP60) family. In terms of assembly, forms a cylinder of 14 subunits composed of two heptameric rings stacked back-to-back. Interacts with the co-chaperonin GroES.

Its subcellular location is the plastid. The protein resides in the chloroplast. It catalyses the reaction ATP + H2O + a folded polypeptide = ADP + phosphate + an unfolded polypeptide.. Together with its co-chaperonin GroES, plays an essential role in assisting protein folding. The GroEL-GroES system forms a nano-cage that allows encapsulation of the non-native substrate proteins and provides a physical environment optimized to promote and accelerate protein folding. This Gracilaria tenuistipitata var. liui (Red alga) protein is Chaperonin GroEL, chloroplastic.